Here is a 110-residue protein sequence, read N- to C-terminus: uncharacterized protein (110 aa).

Transmembrane regions (helical) follow at residues 5-25 (ILAIIFVAVGTYLIRYIPIHL), 62-82 (FPIIFSNVLISTISLIFAIVS), and 90-110 (GISILISVVIYYLASKFLISI).

It to A.fulgidus AF1754.

It localises to the cell membrane. This is an uncharacterized protein from Methanocaldococcus jannaschii (strain ATCC 43067 / DSM 2661 / JAL-1 / JCM 10045 / NBRC 100440) (Methanococcus jannaschii).